The sequence spans 282 residues: Elongation factor Ts (282 aa).

The interval 80–83 (TDFV) is involved in Mg(2+) ion dislocation from EF-Tu.

This sequence belongs to the EF-Ts family.

The protein localises to the cytoplasm. Associates with the EF-Tu.GDP complex and induces the exchange of GDP to GTP. It remains bound to the aminoacyl-tRNA.EF-Tu.GTP complex up to the GTP hydrolysis stage on the ribosome. The protein is Elongation factor Ts of Chlamydia caviae (strain ATCC VR-813 / DSM 19441 / 03DC25 / GPIC) (Chlamydophila caviae).